Consider the following 172-residue polypeptide: MATERAIFAGGCFWCMVQPFEEREGILSVISGYTGGNVENPTYEQVKKHLTGHTEAVEIIFDNSKITYQSLVELYWTLTDPTDAFGQFEDRGDNYRPVIFVENEEQEKIAKESKAQLQASGNFDSPIVTSIETVQKFWPAEDYHQGFYKKNPEDYAQSSKIRHDFLEKQWKK.

C12 is a catalytic residue.

It belongs to the MsrA Met sulfoxide reductase family.

It carries out the reaction L-methionyl-[protein] + [thioredoxin]-disulfide + H2O = L-methionyl-(S)-S-oxide-[protein] + [thioredoxin]-dithiol. The enzyme catalyses [thioredoxin]-disulfide + L-methionine + H2O = L-methionine (S)-S-oxide + [thioredoxin]-dithiol. Its function is as follows. Has an important function as a repair enzyme for proteins that have been inactivated by oxidation. Catalyzes the reversible oxidation-reduction of methionine sulfoxide in proteins to methionine. In Lactococcus lactis subsp. lactis (strain IL1403) (Streptococcus lactis), this protein is Peptide methionine sulfoxide reductase MsrA 2 (msrA2).